Here is a 269-residue protein sequence, read N- to C-terminus: Glutamate racemase (269 aa).

Residues D7–S8 and Y39–G40 each bind substrate. C70 acts as the Proton donor/acceptor in catalysis. N71–T72 contacts substrate. The Proton donor/acceptor role is filled by C194. Residue T195–H196 participates in substrate binding.

The protein belongs to the aspartate/glutamate racemases family.

The catalysed reaction is L-glutamate = D-glutamate. Its pathway is cell wall biogenesis; peptidoglycan biosynthesis. Functionally, provides the (R)-glutamate required for cell wall biosynthesis. This chain is Glutamate racemase, found in Roseobacter denitrificans (strain ATCC 33942 / OCh 114) (Erythrobacter sp. (strain OCh 114)).